The chain runs to 250 residues: 5-oxoprolinase subunit A (250 aa).

This sequence belongs to the LamB/PxpA family. Forms a complex composed of PxpA, PxpB and PxpC.

It carries out the reaction 5-oxo-L-proline + ATP + 2 H2O = L-glutamate + ADP + phosphate + H(+). Its function is as follows. Catalyzes the cleavage of 5-oxoproline to form L-glutamate coupled to the hydrolysis of ATP to ADP and inorganic phosphate. The sequence is that of 5-oxoprolinase subunit A from Paraburkholderia phymatum (strain DSM 17167 / CIP 108236 / LMG 21445 / STM815) (Burkholderia phymatum).